A 440-amino-acid chain; its full sequence is FAD-dependent monooxygenase FVEG_08293 (440 aa).

A helical membrane pass occupies residues 7–26 (EFNVAIVGAGVAGLALAMAL). FAD contacts are provided by E37 and G50. A glycan (N-linked (GlcNAc...) asparagine) is linked at N77. Residue R122 coordinates FAD. Residues R203 and Y235 contribute to the active site. Residues D317 and A330 each contribute to the FAD site.

It belongs to the paxM FAD-dependent monooxygenase family. FAD is required as a cofactor.

It is found in the membrane. Functionally, FAD-dependent monooxygenase; part of the Fusarium detoxification of benzoxazolinone cluster 1 (FDB1) involved in the degradation of benzoxazolinones produced by the host plant. Maize, wheat, and rye produce the 2 benzoxazinone phytoanticipins 2,4-dihy-droxy-7-methoxy-1,4-benzoxazin-3-one (DIMBOA) and 2,4-dihydroxy-1,4-benzoxazin-3-one (DIBOA) that, due to their inherent instability once released, spontaneously degrade to the more stable corresponding benzoxazolinones, 6-methoxy-2-benzoxazolinone (MBOA) and 2-benzoxazolinone (BOA), respectively. The first step in the detoxification of benzoxazolinones involves the hydrolysis of the cyclic ester bond of benzoxazolinones by the FDB1 cluster gamma-lactamase MBL1 to aminophenols. MBL1 is able to convert BOA into 2-aminophenol (2-AP), as well as MBOA into 5-methoxy-2-aminophenol (2-AMP). The FDB2 cluster N-malonyltransferase FDB2/NAT1 then metabolizes aminophenols via N-malonylation to non-toxic malonamic acids. FDB2/NAT1 converts 2-AP into N-(2-hydroxyphenyl) malonamic acid (HPMA) and 2-AMP into N-(2-hydroxy-4-methoxyphenyl) malonamic acid (HMPMA). The duplicated dienlactone hydrolases DLH1 and DLH2 may provide redundant function for hydrolyzing the lactone moiety in the BOA molecule. The roles of the amidases an other enzymes encoded by the 2 FDB clusters have not been identified so far. The chain is FAD-dependent monooxygenase FVEG_08293 from Gibberella moniliformis (strain M3125 / FGSC 7600) (Maize ear and stalk rot fungus).